The chain runs to 114 residues: Hemerythrin (114 aa).

Residues His26, His55, Glu59, His74, His78, His102, and Asp107 each coordinate Fe cation.

The protein belongs to the hemerythrin family. As to quaternary structure, homooctamer.

Its function is as follows. Hemerythrin is a respiratory protein in blood cells of certain marine worms. The oxygen-binding site in each chain contains two iron atoms. The chain is Hemerythrin from Phascolopsis gouldii (Peanut worm).